A 365-amino-acid chain; its full sequence is Cobalt-precorrin-5B C(1)-methyltransferase (365 aa).

Belongs to the CbiD family.

It carries out the reaction Co-precorrin-5B + S-adenosyl-L-methionine = Co-precorrin-6A + S-adenosyl-L-homocysteine. It functions in the pathway cofactor biosynthesis; adenosylcobalamin biosynthesis; cob(II)yrinate a,c-diamide from sirohydrochlorin (anaerobic route): step 6/10. Catalyzes the methylation of C-1 in cobalt-precorrin-5B to form cobalt-precorrin-6A. The sequence is that of Cobalt-precorrin-5B C(1)-methyltransferase from Methanococcus maripaludis (strain C5 / ATCC BAA-1333).